A 197-amino-acid chain; its full sequence is dITP/XTP pyrophosphatase (197 aa).

Residue 9–14 (SNNAGK) participates in substrate binding. The Proton acceptor role is filled by Asp-70. Residue Asp-70 participates in Mg(2+) binding. Residues Ser-71, 153-156 (FGYD), Lys-176, and 181-182 (HR) contribute to the substrate site.

The protein belongs to the HAM1 NTPase family. Homodimer. The cofactor is Mg(2+).

It catalyses the reaction XTP + H2O = XMP + diphosphate + H(+). It carries out the reaction dITP + H2O = dIMP + diphosphate + H(+). The enzyme catalyses ITP + H2O = IMP + diphosphate + H(+). Functionally, pyrophosphatase that catalyzes the hydrolysis of nucleoside triphosphates to their monophosphate derivatives, with a high preference for the non-canonical purine nucleotides XTP (xanthosine triphosphate), dITP (deoxyinosine triphosphate) and ITP. Seems to function as a house-cleaning enzyme that removes non-canonical purine nucleotides from the nucleotide pool, thus preventing their incorporation into DNA/RNA and avoiding chromosomal lesions. The sequence is that of dITP/XTP pyrophosphatase from Chromobacterium violaceum (strain ATCC 12472 / DSM 30191 / JCM 1249 / CCUG 213 / NBRC 12614 / NCIMB 9131 / NCTC 9757 / MK).